A 151-amino-acid chain; its full sequence is UPF0336 protein Franean1_6066 (151 aa).

Residues 8-127 (VGRSYTSDVP…NEVLVTSYEF (120 aa)) form the MaoC-like domain.

It belongs to the UPF0336 family.

The polypeptide is UPF0336 protein Franean1_6066 (Parafrankia sp. (strain EAN1pec)).